The primary structure comprises 175 residues: Replication restart protein PriC (175 aa).

It belongs to the PriC family. In terms of assembly, monomer. Oligomerizes in the absence of DNA. Component of the replication restart primosome, which is composed of PriA, PriB, PriC, DnaB and DnaT; DnaG primase associates transiently with this complex. Interacts with the C-terminus of SSB; this interaction is required for DnaB loading onto substrate replication forks. Interacts with DnaB alone and in the DnaB-DnaC complex, probably 1:1 binding with DnaB.

Functionally, involved in the restart of stalled replication forks, which reloads the replicative helicase (DnaB) on sites other than the origin of replication. Recognizes abandoned replication forks and remodels DNA single-stranded binding protein (SSB) on ssDNA to uncover a loading site for DnaB. There are several restart pathways, the PriA-PriC pathway is a minor restart pathway. Also part of the minor PriC-Rep pathway for restart of stalled replication forks, which has a different substrate specificity than PriA. priB and priC have redundant roles in the cell. Stimulates the 3'-5' helicase activity of Rep helicase in vitro. In vitro can load the DnaB replicative helicase from a DnaB-DnaC complex on an SSB-coated stalled replication fork with no leading- or lagging-strand (or with a gap between the leading strand and fork junction) in the absence of other primosome proteins (PriA, PriB or DnaT). Also part of the major restart pathway with PriA, PriB, DnaB, DnaT and DnaG primase. PriC may contribute to the stability of the preprimosome complex. Preferentially binds approximately 7-9 nucleotides of single-stranded (ss)DNA, also binds double-stranded (ds)DNA. PriB is probably more important in the cell than PriC. This is Replication restart protein PriC from Escherichia coli (strain K12).